Here is a 199-residue protein sequence, read N- to C-terminus: MSQSHFFAHLSRLKLINRWPLMRNVRTENVSEHSLQVAMVAHALAAIKNRKFGGQVNAERIALLAMYHDASEVLTGDLPTPVKYFNSQIAQEYKAIEKIAQQKLVDMVPDELRDIFEPLIDEHHYSEEEQSIVKQADALCAYLKCLEELSAGNNEFLLAKGRLEKTLASRRSAEMDYFMQVFVPSFQLSLDEISQDSPL.

Substrate-binding positions include 18–19 (RW) and histidine 33. The region spanning 30–142 (VSEHSLQVAM…VKQADALCAY (113 aa)) is the HD domain. Positions 33, 68, and 69 each coordinate a divalent metal cation. Substrate is bound by residues aspartate 69, 77–80 (DLPT), and aspartate 137. A divalent metal cation is bound at residue aspartate 137.

Belongs to the 5DNU family. Homodimer. The cofactor is a divalent metal cation.

The protein localises to the cytoplasm. It carries out the reaction a 2'-deoxyribonucleoside 5'-phosphate + H2O = a 2'-deoxyribonucleoside + phosphate. Catalyzes the strictly specific dephosphorylation of 2'-deoxyribonucleoside 5'-monophosphates. The chain is 5'-deoxynucleotidase KPK_1466 from Klebsiella pneumoniae (strain 342).